A 211-amino-acid polypeptide reads, in one-letter code: uncharacterized protein (211 aa).

This is an uncharacterized protein from Homo sapiens (Human).